Reading from the N-terminus, the 439-residue chain is Ectonucleotide pyrophosphatase/phosphodiesterase family member 7 (439 aa).

An N-terminal signal peptide occupies residues 1–21; that stretch reads MGHSAVLLSVALVILPACVTG. Topologically, residues 22-422 are extracellular; the sequence is GPVQRQQQHK…RSGSPLSRQH (401 aa). Zn(2+) contacts are provided by aspartate 38 and threonine 74. The interval 71-77 is required for enzyme activity; that stretch reads VTMTSPC. The active-site Nucleophile is the threonine 74. Residue asparagine 95 participates in substrate binding. Asparagine 99, asparagine 120, asparagine 145, and asparagine 167 each carry an N-linked (GlcNAc...) asparagine glycan. 4 residues coordinate Zn(2+): aspartate 198, histidine 202, aspartate 245, and histidine 246. Asparagine 266 carries an N-linked (GlcNAc...) asparagine glycan. Histidine 352 is a Zn(2+) binding site. The helical transmembrane segment at 423–439 threads the bilayer; that stretch reads HLVVVLMGILTGLAKVV.

It belongs to the nucleotide pyrophosphatase/phosphodiesterase family. The cofactor is Zn(2+). In terms of processing, N-glycosylated; required for activity and transport to the plasma membrane. In terms of tissue distribution, detected in small intestine (at protein level). Highly expressed in the jejunum.

The protein resides in the cell membrane. The enzyme catalyses a sphingomyelin + H2O = phosphocholine + an N-acylsphing-4-enine + H(+). It catalyses the reaction a 1-O-alkyl-2-acetyl-sn-glycero-3-phosphocholine + H2O = a 1-O-alkyl-2-acetyl-sn-glycerol + phosphocholine + H(+). The catalysed reaction is 1-O-octadecyl-2-acetyl-sn-glycero-3-phosphocholine + H2O = 1-O-octadecyl-2-acetyl-sn-glycerol + phosphocholine + H(+). It carries out the reaction 1-hexadecanoyl-sn-glycero-3-phosphocholine + H2O = 1-hexadecanoyl-sn-glycerol + phosphocholine + H(+). With respect to regulation, platelet-activating factor hydrolysis is inhibited by higher amount of sphingomyelin. The hydrolysis of platelet-activating factor and sphingomyelin can be inhibited by the presence of sphingomyelin and platelet-activating factor respectively, the inhibition of platelet-activating factor hydrolysis by sphingomyelin being stronger. PAF hydrolysis is dose-dependently increased by both taurocholate (TC) and taurodeoxycholate (TDC). Hydrolase activity against PAF is inhibited by EDTA and stimulated by 0.1-0.25 mM Zn2+. Its function is as follows. Choline-specific phosphodiesterase that hydrolyzes sphingomyelin (SM) releasing the ceramide and phosphocholine and therefore is involved in sphingomyelin digestion, ceramide formation, and fatty acid (FA) absorption in the gastrointestinal tract. Also has phospholipase C activity and can also cleave phosphocholine from palmitoyl lyso-phosphatidylcholine and platelet-activating factor (PAF) leading to its inactivation. Does not have nucleotide pyrophosphatase activity. May promote cholesterol absorption by affecting the levels of sphingomyelin derived from either diet or endogenous sources, in the intestinal lumen. In Rattus norvegicus (Rat), this protein is Ectonucleotide pyrophosphatase/phosphodiesterase family member 7.